The sequence spans 958 residues: MTDIAESTAHPRDGVPPSQQTTASVASAALATATASASPTTGSATSTAAPGKRSRSSSTGSAKGSIGGKKATRACDQCRKRKIKCDYDNDKNVCSSCNRNGDRCQFNRVQLKRGPSKGFNRNNSTSSAAGASTTSSTHQTFNANASGNTNSSNNNNHNNNNNNSVLLPPITQYFQGNEQNHDQQFWKVPVDLAGHLSPHHSQSHLHRDSVDSATSNNSNLNINGINIVDNSTTNSQSGGYFPVSACRSRASSVPSFPRKPPMQIQPPMTSMYASSLGGGTPATGAIGASNTAVSGATVPGTSSKRRKSVVSSNESPRTSRASLLPRPDFAVVNLVPVPQNVVTPASSLPAVPSGPLPSTGVGVGGSTGQVRLTDLDLINTYYEFVHLNFPVIPINKKALTSDILVINTSIEELNDLVIVWFRNSLELLVTVSLEQPQTQSTHAYTESLNSCFQNVVNLYPRLKQNNGIDPKVKIVYLCTFLILIYVLFFLGQHNSFIISVSVTIFNNFGLYGKLLSLNTSSPDSSSPYDIIFVRLYLLLVTFDSSYSMALGTPKLLNLEINGLVDKFFNLKSQNEHLFIDENLIKVNCILKNLELGEYICNASHMKDSSDAMKVIKSTYMSKKHQSKKADHSSSVSPMFISEWFQKFLVDKKNLISLLLDYQLRINDITPLQLSKLYVDLTNSLCALITVILEILKLMMKLNPTNSIDYNYRPLQHFDIDKPPSGGGGSSSTNTSSNPYSNPNSNEFYQKLLGLSSDRNTNLADMTRGCITPFAIITINELFNVTELIKNIPSSLISVVMESTKEEKENTINPQDLVLKLSNSMNEIVQITSLLTMVKPYKGIDSSYPRWQKFSKRSGPIPSMAPSNTATSTIQDFSEYNMTRSPSLGSSAYSNNPHSQHSDHNFNETNDYNDNISIFKKIYYENNNIQNNTTPQNEVLQSYIDTAWRLLDDSELGWL.

The interval 1–73 (MTDIAESTAH…GSIGGKKATR (73 aa)) is disordered. Residues 21-64 (TTASVASAALATATASASPTTGSATSTAAPGKRSRSSSTGSAKG) are compositionally biased toward low complexity. The segment at residues 75–104 (CDQCRKRKIKCDYDNDKNVCSSCNRNGDRC) is a DNA-binding region (zn(2)-C6 fungal-type). 5 disordered regions span residues 113–165 (RGPS…NNSV), 197–218 (SPHH…SNNS), 291–322 (TAVS…SRAS), 720–740 (DKPP…NPYS), and 884–908 (SPSL…FNET). Low complexity predominate over residues 124–164 (STSSAAGASTTSSTHQTFNANASGNTNSSNNNNHNNNNNNS). Over residues 730–740 (SSTNTSSNPYS) the composition is skewed to low complexity. Residues 884-898 (SPSLGSSAYSNNPHS) are compositionally biased toward polar residues.

This sequence belongs to the EDS1/RGT1 family.

It is found in the nucleus. It localises to the cytoplasm. In terms of biological role, glucose-responsive transcription factor that regulates expression of several glucose transporter (HXT) genes in response to glucose. In the absence of glucose, it functions as a transcriptional repressor, whereas high concentrations of glucose cause it to function as a transcriptional activator. In cells growing on low levels of glucose, has a neutral role, neither repressing nor activating transcription. The chain is Glucose transport transcription regulator RGT1 (RGT1) from Vanderwaltozyma polyspora (strain ATCC 22028 / DSM 70294 / BCRC 21397 / CBS 2163 / NBRC 10782 / NRRL Y-8283 / UCD 57-17) (Kluyveromyces polysporus).